A 1594-amino-acid chain; its full sequence is Calpain-D (1594 aa).

2 consecutive RanBP2-type zinc fingers follow at residues 1–35 and 135–164; these read MGTISSVLQWSCTKCNTINPTESLKCFNCGTVRKV and LNRRWVCHACGTDNSSVTWHCLICDTVSYL. Disordered stretches follow at residues 210-256, 371-400, 420-459, 524-543, and 554-606; these read EEQH…TAID, EPQQKSPANPQQLQRKTQREPAAVSMNPTQ, ASSSSVSSSSNHHHHHHSNSNSNSSGNSNIINNNSSSSSG, KKKQQIASESQTNNNTGSGE, and AGLG…RLSG. Residues 215–229 are compositionally biased toward basic residues; that stretch reads HQLHSQHLHKRHLKG. 2 stretches are compositionally biased toward polar residues: residues 246–255 and 371–385; these read RRTQSLSTAI and EPQQKSPANPQQLQR. A Phosphoserine modification is found at Ser-250. Residues 438–459 are compositionally biased toward low complexity; that stretch reads NSNSNSSGNSNIINNNSSSSSG. Over residues 528 to 541 the composition is skewed to polar residues; the sequence is QIASESQTNNNTGS. The RanBP2-type 3 zinc-finger motif lies at 643-673; it reads RSKMWICIKCSYAYNRLWLQTCEMCEAKAEQ. The disordered stretch occupies residues 684–703; the sequence is QQQQQQHHHHHLQQQQAEAP. 2 RanBP2-type zinc fingers span residues 704–733 and 744–774; these read RDEPWTCKKCTLVNYSTAMACVVCGGSKLK and RKGEFWTCSHCTLKNSLHSPVCSACKSHRQP. 2 disordered regions span residues 786–811 and 860–884; these read RPDGQSYEEQDAAAVGGGGGSAHQSG and SLQQQRNSSSSGAIPKRHSTGGSIV. A compositionally biased stretch (polar residues) spans 860-871; that stretch reads SLQQQRNSSSSG. Residues 927 to 956 form a RanBP2-type 6 zinc finger; the sequence is STKKWQCPACTYDNCAASVVCDICSSPRGL. A Calpain catalytic domain is found at 1014–1321; sequence LFVDDSFPPA…FDCIDICKVR (308 aa). Catalysis depends on residues Cys-1079, His-1245, and Asn-1265.

The protein belongs to the peptidase C2 family.

Has a role in eye development. Its function is as follows. Calcium-regulated non-lysosomal thiol-protease. The protein is Calpain-D (sol) of Drosophila melanogaster (Fruit fly).